Reading from the N-terminus, the 329-residue chain is Glycerol-3-phosphate dehydrogenase [NAD(P)+] (329 aa).

NADPH is bound by residues Ser13, Trp14, His34, and Lys105. 3 residues coordinate sn-glycerol 3-phosphate: Lys105, Gly134, and Ser136. Residue Ala138 participates in NADPH binding. Residues Lys189, Asp242, Ser252, Arg253, and Asn254 each contribute to the sn-glycerol 3-phosphate site. Lys189 serves as the catalytic Proton acceptor. Residue Arg253 participates in NADPH binding. NADPH contacts are provided by Val277 and Glu279.

The protein belongs to the NAD-dependent glycerol-3-phosphate dehydrogenase family.

It is found in the cytoplasm. It carries out the reaction sn-glycerol 3-phosphate + NAD(+) = dihydroxyacetone phosphate + NADH + H(+). It catalyses the reaction sn-glycerol 3-phosphate + NADP(+) = dihydroxyacetone phosphate + NADPH + H(+). The protein operates within membrane lipid metabolism; glycerophospholipid metabolism. In terms of biological role, catalyzes the reduction of the glycolytic intermediate dihydroxyacetone phosphate (DHAP) to sn-glycerol 3-phosphate (G3P), the key precursor for phospholipid synthesis. The chain is Glycerol-3-phosphate dehydrogenase [NAD(P)+] from Legionella pneumophila (strain Corby).